We begin with the raw amino-acid sequence, 158 residues long: uncharacterized protein (158 aa).

Residues Met1–Gly21 show a composition bias toward polar residues. Disordered regions lie at residues Met1–Gly89 and Glu107–Thr158. 2 stretches are compositionally biased toward basic and acidic residues: residues His51–Gly68 and Glu107–Arg127. Residues Gln128–Met137 show a composition bias toward polar residues. Positions Glu149–Thr158 are enriched in basic and acidic residues.

This is an uncharacterized protein from Encephalitozoon cuniculi (strain GB-M1) (Microsporidian parasite).